Here is a 206-residue protein sequence, read N- to C-terminus: MARYLGPKLKLSRREGTDLFLKSGVRAIDTKCKIDNAPGVHGARRGRLSEYGVQLREKQKVRRMYGVLEKQFRNYYKEAARLKGNTGENLLQLLEGRLDNVVYRMGFGATRAEARQLVSHKAILVNGKVVNVPSFKVAANDVVSIREKAKQQARIKAALEVAEQREKPTWIEVDGGKMEGTFKRMPERSDLSADINEQLIVELYSK.

Residues 96-156 enclose the S4 RNA-binding domain; that stretch reads GRLDNVVYRM…EKAKQQARIK (61 aa).

It belongs to the universal ribosomal protein uS4 family. In terms of assembly, part of the 30S ribosomal subunit. Contacts protein S5. The interaction surface between S4 and S5 is involved in control of translational fidelity.

Its function is as follows. One of the primary rRNA binding proteins, it binds directly to 16S rRNA where it nucleates assembly of the body of the 30S subunit. In terms of biological role, with S5 and S12 plays an important role in translational accuracy. The sequence is that of Small ribosomal subunit protein uS4 from Vibrio campbellii (strain ATCC BAA-1116).